A 562-amino-acid polypeptide reads, in one-letter code: Sperm-tail PG-rich repeat-containing protein 2 (562 aa).

STPGR repeat units lie at residues Gly-21–Leu-31, Ser-60–Asn-73, and Pro-96–Pro-118. 2 disordered regions span residues Lys-114–Ile-136 and Ser-192–Gln-215. Over residues Pro-127 to Ile-136 the composition is skewed to low complexity. Residues Gly-193–Asp-202 are compositionally biased toward basic and acidic residues. STPGR repeat units lie at residues Pro-204–Glu-227, Pro-253–His-271, Thr-336–Ala-350, Thr-385–Phe-409, Thr-425–Leu-462, and Thr-478–Ser-492. The tract at residues Ser-543 to Ala-562 is disordered. Over residues Arg-551–Ala-562 the composition is skewed to basic residues.

The protein is Sperm-tail PG-rich repeat-containing protein 2 (stpg2) of Danio rerio (Zebrafish).